Here is a 237-residue protein sequence, read N- to C-terminus: Lectin alpha chain (237 aa).

Mn(2+) is bound by residues E8 and D10. Residues D10, Y12, N14, and D19 each contribute to the Ca(2+) site. A carbohydrate is bound at residue Y12. Mn(2+) contacts are provided by D19, H24, and S34. L99–Y100 contributes to the a carbohydrate binding site. Position 208 (D208) interacts with Ca(2+). Residue R228 participates in a carbohydrate binding.

It belongs to the leguminous lectin family. As to quaternary structure, equilibrium between homodimer and homotetramer. Oligomerization is pH-dependent with homotetramers forming at pH 6.5 and above. In terms of processing, the beta and gamma chains are produced by partial proteolytic processing of the lectin alpha chain by an asparaginyl endopeptidase. Mixture of 60% alpha lectin and 40% of its beta and gamma proteolytic fragments. In terms of tissue distribution, seed.

The protein localises to the vacuole. It localises to the aleurone grain. In terms of biological role, D-mannose/D-glucose-binding lectin. Induces histamine release in mast cells from hamster and rat. Induces lymphocyte proliferation and IFNG production. The sequence is that of Lectin alpha chain from Macropsychanthus bicolor (Dioclea rostrata).